A 236-amino-acid polypeptide reads, in one-letter code: Uridylate kinase (236 aa).

8-11 (KLSG) lines the ATP pocket. An involved in allosteric activation by GTP region spans residues 16-21 (GEQGYG). The ATP site is built by glycine 51 and arginine 55. Residues aspartate 70 and 131–138 (TGNPYFST) each bind UMP. Residues asparagine 159, tyrosine 165, and aspartate 168 each coordinate ATP.

Belongs to the UMP kinase family. As to quaternary structure, homohexamer.

The protein localises to the cytoplasm. It catalyses the reaction UMP + ATP = UDP + ADP. Its pathway is pyrimidine metabolism; CTP biosynthesis via de novo pathway; UDP from UMP (UMPK route): step 1/1. Its activity is regulated as follows. Allosterically activated by GTP. Inhibited by UTP. Catalyzes the reversible phosphorylation of UMP to UDP. The polypeptide is Uridylate kinase (Shouchella clausii (strain KSM-K16) (Alkalihalobacillus clausii)).